The sequence spans 232 residues: uncharacterized protein (232 aa).

The protein resides in the cytoplasm. The protein localises to the nucleus. This is an uncharacterized protein from Saccharomyces cerevisiae (strain ATCC 204508 / S288c) (Baker's yeast).